The chain runs to 155 residues: Ribosomal RNA large subunit methyltransferase H (155 aa).

Residues L72, G103, and 122–127 (LSDLTL) contribute to the S-adenosyl-L-methionine site.

This sequence belongs to the RNA methyltransferase RlmH family. Homodimer.

It is found in the cytoplasm. The catalysed reaction is pseudouridine(1915) in 23S rRNA + S-adenosyl-L-methionine = N(3)-methylpseudouridine(1915) in 23S rRNA + S-adenosyl-L-homocysteine + H(+). Its function is as follows. Specifically methylates the pseudouridine at position 1915 (m3Psi1915) in 23S rRNA. The chain is Ribosomal RNA large subunit methyltransferase H from Albidiferax ferrireducens (strain ATCC BAA-621 / DSM 15236 / T118) (Rhodoferax ferrireducens).